Reading from the N-terminus, the 536-residue chain is Chlorophyllide a oxygenase, chloroplastic (536 aa).

Residues M1 to R36 constitute a chloroplast transit peptide. The stretch at I123 to R150 forms a coiled coil. The Rieske domain maps to W221–I321. [2Fe-2S] cluster is bound by residues C262, H264, C281, and H284. 4 residues coordinate Fe cation: D360, D364, H367, and H372.

It localises to the plastid. The protein localises to the chloroplast membrane. The protein resides in the chloroplast thylakoid membrane. It catalyses the reaction chlorophyllide a + 2 NADPH + 2 O2 + 2 H(+) = chlorophyllide b + 2 NADP(+) + 3 H2O. Its pathway is porphyrin-containing compound metabolism; chlorophyll biosynthesis. Its function is as follows. Catalyzes a two-step oxygenase reaction involved in the synthesis of chlorophyll b. Acts specifically on the non-esterified chlorophyllide a and not on chlorophyll a. The protein is Chlorophyllide a oxygenase, chloroplastic (CAO) of Arabidopsis thaliana (Mouse-ear cress).